A 137-amino-acid chain; its full sequence is NADH-quinone oxidoreductase subunit A 2 (137 aa).

A run of 3 helical transmembrane segments spans residues 12–32 (WGFA…LGVS), 66–86 (FYLV…LFAW), and 95–115 (WAGL…LVYL).

It belongs to the complex I subunit 3 family. NDH-1 is composed of 13 different subunits. Subunits NuoA, H, J, K, L, M, N constitute the membrane sector of the complex.

It localises to the cell inner membrane. The catalysed reaction is a quinone + NADH + 5 H(+)(in) = a quinol + NAD(+) + 4 H(+)(out). Functionally, NDH-1 shuttles electrons from NADH, via FMN and iron-sulfur (Fe-S) centers, to quinones in the respiratory chain. The immediate electron acceptor for the enzyme in this species is believed to be ubiquinone. Couples the redox reaction to proton translocation (for every two electrons transferred, four hydrogen ions are translocated across the cytoplasmic membrane), and thus conserves the redox energy in a proton gradient. This Pseudomonas aeruginosa (strain ATCC 15692 / DSM 22644 / CIP 104116 / JCM 14847 / LMG 12228 / 1C / PRS 101 / PAO1) protein is NADH-quinone oxidoreductase subunit A 2.